The chain runs to 98 residues: Cell division topological specificity factor (98 aa).

It belongs to the MinE family.

In terms of biological role, prevents the cell division inhibition by proteins MinC and MinD at internal division sites while permitting inhibition at polar sites. This ensures cell division at the proper site by restricting the formation of a division septum at the midpoint of the long axis of the cell. In Moorella thermoacetica (strain ATCC 39073 / JCM 9320), this protein is Cell division topological specificity factor.